A 110-amino-acid polypeptide reads, in one-letter code: Flagellar hook-basal body complex protein FliE (110 aa).

Belongs to the FliE family.

It is found in the bacterial flagellum basal body. The sequence is that of Flagellar hook-basal body complex protein FliE from Ralstonia nicotianae (strain ATCC BAA-1114 / GMI1000) (Ralstonia solanacearum).